A 427-amino-acid chain; its full sequence is D-inositol 3-phosphate glycosyltransferase (427 aa).

His12 lines the 1D-myo-inositol 3-phosphate pocket. Residues Gln18–Pro19 and Gly26 each bind UDP-N-acetyl-alpha-D-glucosamine. Residues Asp23–Asn28, Lys81, Tyr113, Thr137, and Arg157 contribute to the 1D-myo-inositol 3-phosphate site. UDP-N-acetyl-alpha-D-glucosamine-binding residues include Arg234, Lys239, and Arg297. Residues Tyr306, Gln307, and Ala309 each coordinate Mg(2+). Residues Glu319 and Glu327 each contribute to the UDP-N-acetyl-alpha-D-glucosamine site. Thr333 serves as a coordination point for Mg(2+).

The protein belongs to the glycosyltransferase group 1 family. MshA subfamily. In terms of assembly, homodimer.

It carries out the reaction 1D-myo-inositol 3-phosphate + UDP-N-acetyl-alpha-D-glucosamine = 1D-myo-inositol 2-acetamido-2-deoxy-alpha-D-glucopyranoside 3-phosphate + UDP + H(+). Catalyzes the transfer of a N-acetyl-glucosamine moiety to 1D-myo-inositol 3-phosphate to produce 1D-myo-inositol 2-acetamido-2-deoxy-glucopyranoside 3-phosphate in the mycothiol biosynthesis pathway. This is D-inositol 3-phosphate glycosyltransferase from Corynebacterium diphtheriae (strain ATCC 700971 / NCTC 13129 / Biotype gravis).